We begin with the raw amino-acid sequence, 206 residues long: Synaptosomal-associated protein 25 (206 aa).

Residues 1–20 (MAEDADMRNELEEMQRRADQ) are compositionally biased toward basic and acidic residues. The interval 1 to 23 (MAEDADMRNELEEMQRRADQLAD) is disordered. The t-SNARE coiled-coil homology 1 domain occupies 19–81 (DQLADESLES…KEAEKNLTDL (63 aa)). S-palmitoyl cysteine attachment occurs at residues C85, C88, C90, and C92. T138 is modified (phosphothreonine). Residues 140 to 202 (DARENEMDEN…DEANQRATKM (63 aa)) form the t-SNARE coiled-coil homology 2 domain. S187 is modified (phosphoserine).

This sequence belongs to the SNAP-25 family. Part of the SNARE core complex containing SNAP25, VAMP2 and STX1A. This complex binds CPLX1. Interacts with TRIM9, RIMS1 and SNAPIN. Binds STXBP6. Found in a ternary complex with STX1A and VAMP8. Associates with the BLOC-1 complex. Isoform 1 and isoform 2 interact with BLOC1S6. Interacts with alpha-synuclein/SNCA. In terms of processing, palmitoylated. Cys-85 appears to be the main site, and palmitoylation is required for membrane association.

The protein localises to the membrane. It is found in the synapse. Its subcellular location is the synaptosome. The protein resides in the cell membrane. Its function is as follows. t-SNARE involved in the molecular regulation of neurotransmitter release. May play an important role in the synaptic function of specific neuronal systems. Associates with proteins involved in vesicle docking and membrane fusion. This chain is Synaptosomal-associated protein 25 (SNAP25), found in Gallus gallus (Chicken).